Reading from the N-terminus, the 122-residue chain is Small ribosomal subunit protein uS13 (122 aa).

The tract at residues 98–122 (VRGQRTHTNARTRKGPAKAIAGKKK) is disordered.

It belongs to the universal ribosomal protein uS13 family. In terms of assembly, part of the 30S ribosomal subunit. Forms a loose heterodimer with protein S19. Forms two bridges to the 50S subunit in the 70S ribosome.

Its function is as follows. Located at the top of the head of the 30S subunit, it contacts several helices of the 16S rRNA. In the 70S ribosome it contacts the 23S rRNA (bridge B1a) and protein L5 of the 50S subunit (bridge B1b), connecting the 2 subunits; these bridges are implicated in subunit movement. Contacts the tRNAs in the A and P-sites. This Ruegeria pomeroyi (strain ATCC 700808 / DSM 15171 / DSS-3) (Silicibacter pomeroyi) protein is Small ribosomal subunit protein uS13.